The chain runs to 139 residues: Ribonuclease P protein component (139 aa).

Residues 116–139 (FSKNKSTIGGEYSPKNEQCESELP) form a disordered region.

This sequence belongs to the RnpA family. As to quaternary structure, consists of a catalytic RNA component (M1 or rnpB) and a protein subunit.

The enzyme catalyses Endonucleolytic cleavage of RNA, removing 5'-extranucleotides from tRNA precursor.. Functionally, RNaseP catalyzes the removal of the 5'-leader sequence from pre-tRNA to produce the mature 5'-terminus. It can also cleave other RNA substrates such as 4.5S RNA. The protein component plays an auxiliary but essential role in vivo by binding to the 5'-leader sequence and broadening the substrate specificity of the ribozyme. The sequence is that of Ribonuclease P protein component from Chlamydia abortus (strain DSM 27085 / S26/3) (Chlamydophila abortus).